Here is a 381-residue protein sequence, read N- to C-terminus: Transcription termination factor 4, mitochondrial (381 aa).

The transit peptide at 1 to 42 directs the protein to the mitochondrion; the sequence is MAAFGRQVLDWHRLIPLTWACMARQTPHLGEQRRTTASLLRK. 5 MTERF repeats span residues 142–172, 177–204, 209–239, 245–270, and 290–318; these read CVVL…LGLG, KRVL…LKEK, VQQV…YAYF, HPDI…YLER, and LKDI…VFKK. Positions 310–327 are dimerization with NSUN4; sequence VEEFQVFKKLLAREEEES. The tract at residues 322 to 381 is disordered; it reads REEEESESSTSDDKRASLDEDEDDDDEEDNDEDDNDEDDDDEDDDEAEDNDEDEDDDEEE. Residues 340-381 are compositionally biased toward acidic residues; sequence DEDEDDDDEEDNDEDDNDEDDDDEDDDEAEDNDEDEDDDEEE.

Belongs to the mTERF family. In terms of assembly, heterodimer with NSUN4; this interaction may be required for NSUN4 recruitment to the mitochondrial large ribosomal subunit. In terms of processing, the mature mitochondrial protein exists in 2 forms differing at the level of their N-terminus, one is starting at residue 43 and the other at residue 48.

The protein resides in the mitochondrion. In terms of biological role, regulator of mitochondrial ribosome biogenesis and translation. Binds to mitochondrial ribosomal RNAs 16S, 12S and 7S and targets NSUN4 RNA methyltransferase to the mitochondrial large ribosomal subunit (39S). This chain is Transcription termination factor 4, mitochondrial (MTERF4), found in Homo sapiens (Human).